The primary structure comprises 202 residues: Pyridoxal 5'-phosphate synthase subunit PdxT (202 aa).

48–50 (GES) lines the L-glutamine pocket. Cysteine 80 functions as the Nucleophile in the catalytic mechanism. L-glutamine contacts are provided by residues arginine 112 and 139–140 (IR). Residues histidine 180 and glutamate 182 each act as charge relay system in the active site.

It belongs to the glutaminase PdxT/SNO family. In terms of assembly, in the presence of PdxS, forms a dodecamer of heterodimers. Only shows activity in the heterodimer.

The catalysed reaction is aldehydo-D-ribose 5-phosphate + D-glyceraldehyde 3-phosphate + L-glutamine = pyridoxal 5'-phosphate + L-glutamate + phosphate + 3 H2O + H(+). It catalyses the reaction L-glutamine + H2O = L-glutamate + NH4(+). The protein operates within cofactor biosynthesis; pyridoxal 5'-phosphate biosynthesis. In terms of biological role, catalyzes the hydrolysis of glutamine to glutamate and ammonia as part of the biosynthesis of pyridoxal 5'-phosphate. The resulting ammonia molecule is channeled to the active site of PdxS. The polypeptide is Pyridoxal 5'-phosphate synthase subunit PdxT (Hyperthermus butylicus (strain DSM 5456 / JCM 9403 / PLM1-5)).